The sequence spans 474 residues: Bifunctional protein HldE (474 aa).

Residues 1–318 are ribokinase; the sequence is MKLSMPRFDQ…RAVQREQGSE (318 aa). 194–197 is an ATP binding site; sequence NLSE. Residue Asp263 is part of the active site. Residues 343 to 474 are cytidylyltransferase; the sequence is FTNGCFDILH…AIVEKIRQKG (132 aa).

In the N-terminal section; belongs to the carbohydrate kinase PfkB family. This sequence in the C-terminal section; belongs to the cytidylyltransferase family. Homodimer.

It carries out the reaction D-glycero-beta-D-manno-heptose 7-phosphate + ATP = D-glycero-beta-D-manno-heptose 1,7-bisphosphate + ADP + H(+). The catalysed reaction is D-glycero-beta-D-manno-heptose 1-phosphate + ATP + H(+) = ADP-D-glycero-beta-D-manno-heptose + diphosphate. Its pathway is nucleotide-sugar biosynthesis; ADP-L-glycero-beta-D-manno-heptose biosynthesis; ADP-L-glycero-beta-D-manno-heptose from D-glycero-beta-D-manno-heptose 7-phosphate: step 1/4. The protein operates within nucleotide-sugar biosynthesis; ADP-L-glycero-beta-D-manno-heptose biosynthesis; ADP-L-glycero-beta-D-manno-heptose from D-glycero-beta-D-manno-heptose 7-phosphate: step 3/4. Its function is as follows. Catalyzes the phosphorylation of D-glycero-D-manno-heptose 7-phosphate at the C-1 position to selectively form D-glycero-beta-D-manno-heptose-1,7-bisphosphate. In terms of biological role, catalyzes the ADP transfer from ATP to D-glycero-beta-D-manno-heptose 1-phosphate, yielding ADP-D-glycero-beta-D-manno-heptose. The polypeptide is Bifunctional protein HldE (Pseudomonas aeruginosa (strain UCBPP-PA14)).